Here is a 483-residue protein sequence, read N- to C-terminus: Endoplasmic reticulum lectin 1 (483 aa).

An N-terminal signal peptide occupies residues 1 to 33 (MEEGDGGLRSLVPGGPLLLVLYGLLEASGGGRA). MRH domains lie at 111–246 (SSCS…LCSH) and 342–469 (SYCF…ICKI). The cysteines at positions 113 and 126 are disulfide-linked. Asparagine 195 carries N-linked (GlcNAc...) asparagine glycosylation. 5 cysteine pairs are disulfide-bonded: cysteine 199-cysteine 232, cysteine 215-cysteine 244, cysteine 344-cysteine 357, cysteine 421-cysteine 455, and cysteine 436-cysteine 467.

As to quaternary structure, may form a complex with OS9, HSPA5, SYVN1, and SEL1L with which it interacts directly. Interacts (via PRKCSH 2 domain) with KREMEN2 (when glycosylated). Interacts with HSPA5. N-glycosylated.

It is found in the endoplasmic reticulum lumen. Its function is as follows. Probable lectin that binds selectively to improperly folded lumenal proteins. May function in endoplasmic reticulum quality control and endoplasmic reticulum-associated degradation (ERAD) of both non-glycosylated proteins and glycoproteins. The polypeptide is Endoplasmic reticulum lectin 1 (Erlec1) (Mus musculus (Mouse)).